The chain runs to 271 residues: Tryptophan synthase alpha chain (271 aa).

Active-site proton acceptor residues include Glu53 and Asp64.

It belongs to the TrpA family. In terms of assembly, tetramer of two alpha and two beta chains.

It carries out the reaction (1S,2R)-1-C-(indol-3-yl)glycerol 3-phosphate + L-serine = D-glyceraldehyde 3-phosphate + L-tryptophan + H2O. Its pathway is amino-acid biosynthesis; L-tryptophan biosynthesis; L-tryptophan from chorismate: step 5/5. Its function is as follows. The alpha subunit is responsible for the aldol cleavage of indoleglycerol phosphate to indole and glyceraldehyde 3-phosphate. This chain is Tryptophan synthase alpha chain, found in Streptomyces coelicolor (strain ATCC BAA-471 / A3(2) / M145).